Here is a 20-residue protein sequence, read N- to C-terminus: Citrate synthase (20 aa).

The protein belongs to the citrate synthase family. Homodimer.

The catalysed reaction is oxaloacetate + acetyl-CoA + H2O = citrate + CoA + H(+). It participates in carbohydrate metabolism; tricarboxylic acid cycle; isocitrate from oxaloacetate: step 1/2. This is Citrate synthase from Populus euphratica (Euphrates poplar).